Here is a 635-residue protein sequence, read N- to C-terminus: Moesin/ezrin/radixin homolog 2 (635 aa).

The region spanning 12–305 is the FERM domain; sequence LSVRVSTFDS…GNHDLYMRRR (294 aa).

In terms of assembly, interacts with Moe and arm at the adherens junction. Forms a complex with Kibra and Ex. Interacts (via FERM domain) with Sav (via FBM motif). Interacts with Schip1. In terms of tissue distribution, expressed predominantly in the germline. Expressed in the developing oocyte from stage 6 to the end of oogenesis and in the apical ends of follical cells from stage 10. Ubiquitous expression throughout embryogenesis with enhanced expression in mesoderm of early embryos and midgut of late embryos. In embryonic CNS, expression is seen in neuropil and developing brain and is enhanced in neuronal cell bodies. In embryonic PNS, expression is seen within the cell body. In third instar larvae, expression is uniform in the eye imaginal disk and is enhanced at the morphogenetic furrow. In pupal eyes, expression is seen in the cytoplasm of secondary and tertiary pigment cells, bristle precursor cells and rhabdomeres.

The protein resides in the cell junction. It is found in the adherens junction. It localises to the cell membrane. The protein localises to the cytoplasm. Its subcellular location is the cytoskeleton. The protein resides in the apical cell membrane. It is found in the cell projection. It localises to the rhabdomere. Functionally, regulator of the Hippo/SWH (Sav/Wts/Hpo) signaling pathway, a signaling pathway that plays a pivotal role in organ size control and tumor suppression by restricting proliferation and promoting apoptosis. The core of this pathway is composed of a kinase cascade wherein Hippo (Hpo), in complex with its regulatory protein Salvador (Sav), phosphorylates and activates Warts (Wts) in complex with its regulatory protein Mats, which in turn phosphorylates and inactivates the Yorkie (Yki) oncoprotein. Mer acts synergistically along with Ex and Kibra to regulate the Hippo signaling pathway. In Drosophila melanogaster (Fruit fly), this protein is Moesin/ezrin/radixin homolog 2 (Mer).